Consider the following 380-residue polypeptide: Protein-tyrosine sulfotransferase A (380 aa).

The Cytoplasmic segment spans residues 1 to 6; the sequence is MRKNRE. Residues 7 to 27 traverse the membrane as a helical; Signal-anchor for type II membrane protein segment; sequence LLLVLFLVVFILFYFITARTA. The Lumenal segment spans residues 28–380; the sequence is DDPYYSNHRE…PIVDNEVSKL (353 aa). N-linked (GlcNAc...) asparagine glycosylation is present at N66. 79–83 serves as a coordination point for 3'-phosphoadenylyl sulfate; sequence RSGTT. C97 and C157 are disulfide-bonded. E100 (proton donor/acceptor) is an active-site residue. The tract at residues 102–106 is interaction with peptide substrate; the sequence is RVIPR. Residues R184, S192, and R196 each coordinate 3'-phosphoadenylyl sulfate. An intrachain disulfide couples C226 to C234. Residues Y239, 284-293, and K299 each bind 3'-phosphoadenylyl sulfate; that span reads SSDQVVKPVN.

It belongs to the protein sulfotransferase family.

Its subcellular location is the golgi apparatus membrane. It catalyses the reaction L-tyrosyl-[protein] + 3'-phosphoadenylyl sulfate = O-sulfo-L-tyrosine-[protein] + adenosine 3',5'-bisphosphate + H(+). Functionally, catalyzes the O-sulfation of tyrosine residues within acidic motifs of polypeptides, using 3'-phosphoadenylyl sulfate (PAPS) as cosubstrate. The protein is Protein-tyrosine sulfotransferase A (tpst-1) of Caenorhabditis elegans.